A 288-amino-acid chain; its full sequence is Glucose-1-phosphate thymidylyltransferase (288 aa).

Mg(2+) contacts are provided by D108 and D223.

This sequence belongs to the glucose-1-phosphate thymidylyltransferase family. Homotetramer. Requires Mg(2+) as cofactor.

It catalyses the reaction dTTP + alpha-D-glucose 1-phosphate + H(+) = dTDP-alpha-D-glucose + diphosphate. Catalyzes the formation of dTDP-glucose, from dTTP and glucose 1-phosphate, as well as its pyrophosphorolysis. The sequence is that of Glucose-1-phosphate thymidylyltransferase (rmlA1) from Neisseria meningitidis serogroup A / serotype 4A (strain DSM 15465 / Z2491).